A 167-amino-acid chain; its full sequence is UPF0179 protein Pisl_0688 (167 aa).

It belongs to the UPF0179 family.

This Pyrobaculum islandicum (strain DSM 4184 / JCM 9189 / GEO3) protein is UPF0179 protein Pisl_0688.